The primary structure comprises 218 residues: Adenylate kinase (218 aa).

10–15 (GAGKGT) contacts ATP. The NMP stretch occupies residues 30–59 (STGDMLRAAVKAGSPLGLKVKEVMATGGLV). AMP is bound by residues threonine 31, arginine 36, 57–59 (GLV), 85–88 (GFPR), and glutamine 92. Residues 122-159 (GRRVHEASGRVYHVDYNPPKVEGKDDVTGEPLVQREDD) are LID. ATP contacts are provided by residues arginine 123 and 132–133 (VY). 2 residues coordinate AMP: arginine 156 and arginine 167. Position 203 (glycine 203) interacts with ATP.

It belongs to the adenylate kinase family. In terms of assembly, monomer.

The protein resides in the cytoplasm. It catalyses the reaction AMP + ATP = 2 ADP. It participates in purine metabolism; AMP biosynthesis via salvage pathway; AMP from ADP: step 1/1. Functionally, catalyzes the reversible transfer of the terminal phosphate group between ATP and AMP. Plays an important role in cellular energy homeostasis and in adenine nucleotide metabolism. This Hahella chejuensis (strain KCTC 2396) protein is Adenylate kinase.